Here is a 719-residue protein sequence, read N- to C-terminus: Polyribonucleotide nucleotidyltransferase (719 aa).

Residues Asp-490 and Asp-496 each contribute to the Mg(2+) site. A KH domain is found at 557–619; the sequence is PKIEIIIIPK…KSIDAALTRI (63 aa). The S1 motif domain maps to 629–699; the sequence is GEIYEGKIRS…KTGKFKLSHK (71 aa).

It belongs to the polyribonucleotide nucleotidyltransferase family. Mg(2+) serves as cofactor.

The protein resides in the cytoplasm. It carries out the reaction RNA(n+1) + phosphate = RNA(n) + a ribonucleoside 5'-diphosphate. Involved in mRNA degradation. Catalyzes the phosphorolysis of single-stranded polyribonucleotides processively in the 3'- to 5'-direction. This Azobacteroides pseudotrichonymphae genomovar. CFP2 protein is Polyribonucleotide nucleotidyltransferase.